The following is a 192-amino-acid chain: Elongation factor P (192 aa).

The protein belongs to the elongation factor P family.

The protein localises to the cytoplasm. It functions in the pathway protein biosynthesis; polypeptide chain elongation. In terms of biological role, involved in peptide bond synthesis. Stimulates efficient translation and peptide-bond synthesis on native or reconstituted 70S ribosomes in vitro. Probably functions indirectly by altering the affinity of the ribosome for aminoacyl-tRNA, thus increasing their reactivity as acceptors for peptidyl transferase. This Aquifex aeolicus (strain VF5) protein is Elongation factor P (efp).